We begin with the raw amino-acid sequence, 352 residues long: Protein RecA (352 aa).

67 to 74 (GPESSGKT) lines the ATP pocket.

The protein belongs to the RecA family.

It is found in the cytoplasm. In terms of biological role, can catalyze the hydrolysis of ATP in the presence of single-stranded DNA, the ATP-dependent uptake of single-stranded DNA by duplex DNA, and the ATP-dependent hybridization of homologous single-stranded DNAs. It interacts with LexA causing its activation and leading to its autocatalytic cleavage. The sequence is that of Protein RecA from Klebsiella pneumoniae subsp. pneumoniae (strain ATCC 700721 / MGH 78578).